A 399-amino-acid chain; its full sequence is Acetate kinase 2 (399 aa).

Residue N10 participates in Mg(2+) binding. An ATP-binding site is contributed by K17. Substrate is bound at residue R89. The active-site Proton donor/acceptor is D146. Residues 206 to 210, 281 to 283, and 329 to 333 contribute to the ATP site; these read HLGNG, DCR, and GIGEN. Residue E384 coordinates Mg(2+).

It belongs to the acetokinase family. As to quaternary structure, homodimer. Requires Mg(2+) as cofactor. Mn(2+) serves as cofactor.

Its subcellular location is the cytoplasm. The catalysed reaction is acetate + ATP = acetyl phosphate + ADP. It functions in the pathway metabolic intermediate biosynthesis; acetyl-CoA biosynthesis; acetyl-CoA from acetate: step 1/2. In terms of biological role, catalyzes the formation of acetyl phosphate from acetate and ATP. Can also catalyze the reverse reaction. This is Acetate kinase 2 from Neisseria meningitidis serogroup A / serotype 4A (strain DSM 15465 / Z2491).